The sequence spans 529 residues: Bifunctional purine biosynthesis protein PurH (529 aa).

Residues 2-149 (TDLVPLRRAL…KNHSFVTVLT (148 aa)) enclose the MGS-like domain.

It belongs to the PurH family.

It catalyses the reaction (6R)-10-formyltetrahydrofolate + 5-amino-1-(5-phospho-beta-D-ribosyl)imidazole-4-carboxamide = 5-formamido-1-(5-phospho-D-ribosyl)imidazole-4-carboxamide + (6S)-5,6,7,8-tetrahydrofolate. The enzyme catalyses IMP + H2O = 5-formamido-1-(5-phospho-D-ribosyl)imidazole-4-carboxamide. Its pathway is purine metabolism; IMP biosynthesis via de novo pathway; 5-formamido-1-(5-phospho-D-ribosyl)imidazole-4-carboxamide from 5-amino-1-(5-phospho-D-ribosyl)imidazole-4-carboxamide (10-formyl THF route): step 1/1. It functions in the pathway purine metabolism; IMP biosynthesis via de novo pathway; IMP from 5-formamido-1-(5-phospho-D-ribosyl)imidazole-4-carboxamide: step 1/1. This chain is Bifunctional purine biosynthesis protein PurH, found in Dinoroseobacter shibae (strain DSM 16493 / NCIMB 14021 / DFL 12).